The primary structure comprises 231 residues: Orotidine 5'-phosphate decarboxylase (231 aa).

Residues Asp11, Lys33, 60 to 69 (DLKFHDIPNT), Thr117, Arg178, Gln187, Gly207, and Arg208 contribute to the substrate site. Lys62 serves as the catalytic Proton donor.

The protein belongs to the OMP decarboxylase family. Type 1 subfamily. As to quaternary structure, homodimer.

It catalyses the reaction orotidine 5'-phosphate + H(+) = UMP + CO2. It participates in pyrimidine metabolism; UMP biosynthesis via de novo pathway; UMP from orotate: step 2/2. Functionally, catalyzes the decarboxylation of orotidine 5'-monophosphate (OMP) to uridine 5'-monophosphate (UMP). This chain is Orotidine 5'-phosphate decarboxylase, found in Nitrosomonas europaea (strain ATCC 19718 / CIP 103999 / KCTC 2705 / NBRC 14298).